The sequence spans 905 residues: MEGESSRFEIHTPVSDKKKKKCSIHKERPQKHSHEIFRDSSLVNEQSQITRRKKRKKDFQHLISSPLKKSRICDETANATSTLKKRKKRRYSALEVDEEAGVTVVLVDKENINNTPKHFRKDVDVVCVDMSIEQKLPRKPKTDKFQVLAKSHAHKSEALHSKVREKKNKKHQRKAASWESQRARDTLPQSESHQEESWLSVGPGGEITELPASAHKNKSKKKKKKSSNREYETLAMPEGSQAGREAGTDMQESQPTVGLDDETPQLLGPTHKKKSKKKKKKKSNHQEFEALAMPEGSQVGSEVGADMQESRPAVGLHGETAGIPAPAYKNKSKKKKKKSNHQEFEAVAMPESLESAYPEGSQVGSEVGTVEGSTALKGFKESNSTKKKSKKRKLTSVKRARVSGDDFSVPSKNSESTLFDSVEGDGAMMEEGVKSRPRQKKTQACLASKHVQEAPRLEPANEEHNVETAEDSEIRYLSADSGDADDSDADLGSAVKQLQEFIPNIKDRATSTIKRMYRDDLERFKEFKAQGVAIKFGKFSVKENKQLEKNVEDFLALTGIESADKLLYTDRYPEEKSVITNLKRRYSFRLHIGRNIARPWKLIYYRAKKMFDVNNYKGRYSEGDTEKLKMYHSLLGNDWKTIGEMVARSSLSVALKFSQISSQRNRGAWSKSETRKLIKAVEEVILKKMSPQELKEVDSKLQENPESCLSIVREKLYKGISWVEVEAKVQTRNWMQCKSKWTEILTKRMTNGRRIYYGMNALRAKVSLIERLYEINVEDTNEIDWEDLASAIGDVPPSYVQTKFSRLKAVYVPFWQKKTFPEIIDYLYETTLPLLKEKLEKMMEKKGTKIQTPAAPKQVFPFRDIFYYEDDSEGEDIEKESEGQAPCMAHACNSSTLGGQGRWII.

Composition is skewed to basic and acidic residues over residues 1–16 (MEGE…PVSD) and 24–33 (IHKERPQKHS). Residues 1–33 (MEGESSRFEIHTPVSDKKKKKCSIHKERPQKHS) form a disordered region. The N-terminal region (NRD) stretch occupies residues 1–223 (MEGESSRFEI…AHKNKSKKKK (223 aa)). A Phosphoserine modification is found at Ser65. The segment at 151–443 (SHAHKSEALH…KSRPRQKKTQ (293 aa)) is disordered. Composition is skewed to basic residues over residues 163–174 (VREKKNKKHQRK) and 215–226 (HKNKSKKKKKKS). Position 240 is a phosphoserine (Ser240). A Phosphothreonine modification is found at Thr248. Composition is skewed to basic residues over residues 270–283 (THKK…KKKS), 330–339 (NKSKKKKKKS), and 385–401 (TKKK…KRAR). Ser403 is subject to Phosphoserine. A compositionally biased stretch (polar residues) spans 410–419 (PSKNSESTLF). Tyr476 carries the phosphotyrosine modification. Ser478, Ser481, and Ser487 each carry phosphoserine. Residues 498-886 (LQEFIPNIKD…IEKESEGQAP (389 aa)) are may be involved in interaction with ARF. Myb-like domains are found at residues 612–661 (DVNN…SQIS) and 661–745 (SSQR…TEIL). A Glycyl lysine isopeptide (Lys-Gly) (interchain with G-Cter in SUMO2) cross-link involves residue Lys700. Ser872 is modified (phosphoserine).

In terms of assembly, oligomer. The oligomeric structure enables to interact simultaneously with two separate DNA fragments. Interacts with BAZ2A/TIP5. Interacts with CAVIN1. Interacts (via the N-terminal region (NRD) and a C-terminal region) with CDKN2A/ARF; the interaction is direct. Interacts (via C-terminal region) with NPM1/B23.

The protein resides in the nucleus. It is found in the nucleolus. Its subcellular location is the nucleoplasm. In terms of biological role, multifunctional nucleolar protein that terminates ribosomal gene transcription, mediates replication fork arrest and regulates RNA polymerase I transcription on chromatin. Plays a dual role in rDNA regulation, being involved in both activation and silencing of rDNA transcription. Interaction with BAZ2A/TIP5 recovers DNA-binding activity. This Homo sapiens (Human) protein is Transcription termination factor 1 (TTF1).